The sequence spans 199 residues: uncharacterized protein (199 aa).

A disordered region spans residues 1–41 (MKFKRDENQNSTHHRGNKNNTNNDDDDKEEEEEIINDTTMP). Residues 23–35 (NDDDDKEEEEEII) show a composition bias toward acidic residues. Transmembrane regions (helical) follow at residues 73 to 93 (LILD…FAFW), 96 to 116 (ISTY…VSFL), and 166 to 186 (IAIA…SPYL).

It is found in the membrane. This is an uncharacterized protein from Dictyostelium discoideum (Social amoeba).